A 320-amino-acid chain; its full sequence is Transcription factor bHLH34 (320 aa).

The 52-residue stretch at 162 to 213 (SKPGTKACREKLRREKLNDKFMDLSSVLEPGRTPKTDKSAILDDAIRVVNQL) folds into the bHLH domain. A disordered region spans residues 299-320 (WSPLPPADRDTSRDLKNLPPVA). A compositionally biased stretch (basic and acidic residues) spans 305–314 (ADRDTSRDLK).

Homodimer. In terms of tissue distribution, expressed constitutively in roots, leaves, stems, and flowers.

It localises to the nucleus. This chain is Transcription factor bHLH34 (BHLH34), found in Arabidopsis thaliana (Mouse-ear cress).